Consider the following 245-residue polypeptide: Nicotinamide/nicotinic acid mononucleotide adenylyltransferase 3 (245 aa).

The NAD(+) site is built by Ser-14 and Phe-15. Residues His-22 and Lys-56 each coordinate ATP. Trp-90, Thr-93, Gly-134, and Asp-136 together coordinate NAD(+). Lys-139 is an ATP binding site. NAD(+) contacts are provided by Leu-146, Trp-147, Arg-166, and Asn-197. 202 to 205 contacts ATP; that stretch reads TYVR.

Belongs to the eukaryotic NMN adenylyltransferase family. In terms of assembly, homotetramer. Mg(2+) serves as cofactor.

The protein localises to the mitochondrion. The catalysed reaction is beta-nicotinamide D-ribonucleotide + ATP + H(+) = diphosphate + NAD(+). It catalyses the reaction nicotinate beta-D-ribonucleotide + ATP + H(+) = deamido-NAD(+) + diphosphate. It participates in cofactor biosynthesis; NAD(+) biosynthesis; NAD(+) from nicotinamide D-ribonucleotide: step 1/1. It functions in the pathway cofactor biosynthesis; NAD(+) biosynthesis; deamido-NAD(+) from nicotinate D-ribonucleotide: step 1/1. Activity is strongly inhibited by galotannin. Inhibited by P1-(adenosine-5')-P4-(nicotinic-acid-riboside-5')-tetraphosphate (Nap4AD). Catalyzes the formation of NAD(+) from nicotinamide mononucleotide (NMN) and ATP. Can also use the deamidated form; nicotinic acid mononucleotide (NaMN) as substrate with the same efficiency. Can use triazofurin monophosphate (TrMP) as substrate. Can also use GTP and ITP as nucleotide donors. Also catalyzes the reverse reaction, i.e. the pyrophosphorolytic cleavage of NAD(+). For the pyrophosphorolytic activity, can use NAD(+), NADH, NaAD, nicotinic acid adenine dinucleotide phosphate (NHD), nicotinamide guanine dinucleotide (NGD) as substrates. Fails to cleave phosphorylated dinucleotides NADP(+), NADPH and NaADP(+). Protects against axonal degeneration following injury. May be involved in the maintenance of axonal integrity. Also functions as a stress-response chaperone protein that prevents toxic aggregation of proteins; this function may be independent of its NAD(+) synthesis activity. This Mus musculus (Mouse) protein is Nicotinamide/nicotinic acid mononucleotide adenylyltransferase 3.